The following is a 244-amino-acid chain: DNA repair protein RecO (244 aa).

This sequence belongs to the RecO family.

In terms of biological role, involved in DNA repair and RecF pathway recombination. The chain is DNA repair protein RecO from Koribacter versatilis (strain Ellin345).